A 173-amino-acid polypeptide reads, in one-letter code: Small ribosomal subunit protein uS10m (173 aa).

This sequence belongs to the universal ribosomal protein uS10 family. Component of the mitochondrial ribosome small subunit (28S) which comprises a 12S rRNA and about 30 distinct proteins.

It is found in the mitochondrion. This is Small ribosomal subunit protein uS10m (mRpS10) from Drosophila melanogaster (Fruit fly).